The following is a 795-amino-acid chain: Phenylalanine--tRNA ligase beta subunit (795 aa).

The region spanning 39–148 (AGAFHGVVVG…ADAPIGTDIR (110 aa)) is the tRNA-binding domain. The region spanning 401–476 (PTRATITLRR…RIYGYNNIPN (76 aa)) is the B5 domain. Residues aspartate 454, aspartate 460, glutamate 463, and glutamate 464 each contribute to the Mg(2+) site. The FDX-ACB domain maps to 701 to 794 (SRFPANRRDI…LKQRFQASLR (94 aa)).

Belongs to the phenylalanyl-tRNA synthetase beta subunit family. Type 1 subfamily. As to quaternary structure, tetramer of two alpha and two beta subunits. Requires Mg(2+) as cofactor.

It is found in the cytoplasm. The enzyme catalyses tRNA(Phe) + L-phenylalanine + ATP = L-phenylalanyl-tRNA(Phe) + AMP + diphosphate + H(+). This chain is Phenylalanine--tRNA ligase beta subunit, found in Pectobacterium atrosepticum (strain SCRI 1043 / ATCC BAA-672) (Erwinia carotovora subsp. atroseptica).